The sequence spans 215 residues: Cytochrome b6 (215 aa).

Residues 32 to 52 (IFYCLGGITLTCFLVQVATGF) form a helical membrane-spanning segment. Cysteine 35 contacts heme c. Histidine 86 and histidine 100 together coordinate heme b. 3 consecutive transmembrane segments (helical) span residues 90–110 (ASMM…TGGF), 116–136 (LTWV…VTGY), and 186–206 (LHTF…FLMI). Heme b is bound by residues histidine 187 and histidine 202.

The protein belongs to the cytochrome b family. PetB subfamily. The 4 large subunits of the cytochrome b6-f complex are cytochrome b6, subunit IV (17 kDa polypeptide, PetD), cytochrome f and the Rieske protein, while the 4 small subunits are PetG, PetL, PetM and PetN. The complex functions as a dimer. Heme b is required as a cofactor. The cofactor is heme c.

The protein localises to the plastid. It localises to the chloroplast thylakoid membrane. Functionally, component of the cytochrome b6-f complex, which mediates electron transfer between photosystem II (PSII) and photosystem I (PSI), cyclic electron flow around PSI, and state transitions. This Ostreococcus tauri protein is Cytochrome b6.